The sequence spans 373 residues: MFLNGQGGQRPPMVAFPPLNVRGSISSGFNALGRSRNNSDAMDIYTITDRGPAAERDPAAGRWHANGSPSINSTSSKNPDRYPCYQENGRTYHGYRKGIYMLPCDEQEQDRLDIFHKLFTVARVSDGLIYAPHPTNGRFLDLGCGTGIWAIDVANKYPEAFVVGVDLAPIQPPNHPRNCDFYAPFDFESLWALGEDSWDLIHMQMGSGSVASWPNLYRRIYSHLRPGAWFEQVEIDFEPRCDDRSLEGLAIRQWYQLLKQATEETMRPVAHNSRETIRNLQEAGFTEIDHQMVGLPLNPWHEDEHERRVARWYNLAISESIETMSLAPFSRVFGWPIERIKQIAADVKSEAFNKEIHTYNILHIYQARKPLAN.

Residues 55-81 (ERDPAAGRWHANGSPSINSTSSKNPDR) form a disordered region. Residues 67–77 (GSPSINSTSSK) are compositionally biased toward polar residues.

It belongs to the methyltransferase superfamily. LaeA methyltransferase family. In terms of assembly, component of the heterotrimeric velvet complex composed of laeA, veA and velB; VeA acting as a bridging protein between laeA and velB.

It localises to the nucleus. It catalyses the reaction L-methionyl-[protein] + S-adenosyl-L-methionine = S-methyl-L-methionyl-[protein] + S-adenosyl-L-homocysteine. Methyltransferase that performs automethylation. No other methyl-accepting substrate has been identified yet. Component of the velvet transcription factor complex that acts as a global regulator for secondary metabolite gene expression. Positively controls expression of 20% to 40% of major classes of secondary metabolite biosynthesis genes such as nonribosomal peptide synthetases, polyketide synthases, and P450 monooxygenases. Controls the expression of the gliotoxin gene cluster. Controls the expression of the fumitremorgin, fumagillin, and pseurotin gene clusters, where genes for fumagillin and pseurotin are physically intertwined in a single supercluster. Regulates the biosynthetic genes required for endocrocin production. Secondary metabolites under the transcriptional regulation of laeA are necessary for inhibition of angiogenesis during invasive infection in mice. Controls the expression of cell surface rodA, a hydrophobin that acts as an antiphagocytic molecule. Also regulates the expression of genes involved in conidial biosynthesis. The polypeptide is Secondary metabolism regulator laeA (Aspergillus fumigatus (strain ATCC MYA-4609 / CBS 101355 / FGSC A1100 / Af293) (Neosartorya fumigata)).